The following is a 721-amino-acid chain: Protein mu-NS (721 aa).

An interaction with sigma-NS region spans residues 1 to 13; it reads MASFKGFSVNTVP. The segment at 1 to 38 is RNA-binding; it reads MASFKGFSVNTVPVSKAKRDISSLAATPGIRSQPFTPS. The interval 14–40 is interaction with mu-2; that stretch reads VSKAKRDISSLAATPGIRSQPFTPSVD. Positions 471–721 are involved in the formation of factory-like inclusions; it reads SSDMVDGIKL…IDFSVPTDEL (251 aa). Coiled coils occupy residues 523 to 560 and 628 to 686; these read LLSQ…SAQA and QMNG…NQRQ.

The protein belongs to the orthoreovirus mu-NS protein family. In terms of assembly, interacts with mu-2. Interacts with sigma-NS; in viral factories. Interacts with the inner capsid proteins lambda-1 and sigma-2, and outer capsid protein lambda-2; in viral factories. Post-translationally, the N-terminus is blocked.

The protein resides in the host cytoplasm. In terms of biological role, non-structural protein implicated with protein sigma-NS in forming the matrix of viral factories, which are large inclusions in the host cytoplasm where replication intermediates are assembled and viral RNA replication takes place. Together with mu-2, recruits the other core proteins to these factories. The sequence is that of Protein mu-NS (M3) from Mammalia (T1L).